We begin with the raw amino-acid sequence, 604 residues long: UvrABC system protein C (604 aa).

In terms of domain architecture, GIY-YIG spans alanine 17–isoleucine 95. The 36-residue stretch at aspartate 204–isoleucine 239 folds into the UVR domain.

This sequence belongs to the UvrC family. As to quaternary structure, interacts with UvrB in an incision complex.

The protein localises to the cytoplasm. Its function is as follows. The UvrABC repair system catalyzes the recognition and processing of DNA lesions. UvrC both incises the 5' and 3' sides of the lesion. The N-terminal half is responsible for the 3' incision and the C-terminal half is responsible for the 5' incision. The polypeptide is UvrABC system protein C (Nitrosomonas europaea (strain ATCC 19718 / CIP 103999 / KCTC 2705 / NBRC 14298)).